A 337-amino-acid chain; its full sequence is MAPIKIGINGFGRIGRLVARVALQRDDVELVAVNDPFISTDYMTYMFKYDSVHGAWKHHELKVKDEKTLLFGEKPVVVFGRRNPEEIPRASTGAEYIVESTGVFTDKDKAAAHLKGGAKKVIISAPSKDAPMFVVGVNEKEYKSDLHIVSNASCTTNCLAPLAKVINDRFGIVEGLMTTVHSITATQKTVDGPSAKDWRGGRAASFNIIPSSTGAAKAVGKVLPQLNGKLTGMSFRVPTVDVSVVDLTVRLEKKATYEQIKAAIKEESEGKLKGILGYTEDDVVSTDFVGDSRSSIFDAKAGIALNDNFVKLVSWYDNEWGYSTRVVDLIVHMASVQ.

NAD(+) contacts are provided by residues 13–14, D35, and R82; that span reads RI. Residues 153–155, T184, 213–214, and R236 contribute to the D-glyceraldehyde 3-phosphate site; these read SCT and TG. C154 acts as the Nucleophile in catalysis. Residue N318 participates in NAD(+) binding.

Belongs to the glyceraldehyde-3-phosphate dehydrogenase family. In terms of assembly, homotetramer.

The protein localises to the cytoplasm. The enzyme catalyses D-glyceraldehyde 3-phosphate + phosphate + NAD(+) = (2R)-3-phospho-glyceroyl phosphate + NADH + H(+). Its pathway is carbohydrate degradation; glycolysis; pyruvate from D-glyceraldehyde 3-phosphate: step 1/5. In terms of biological role, key enzyme in glycolysis that catalyzes the first step of the pathway by converting D-glyceraldehyde 3-phosphate (G3P) into 3-phospho-D-glyceroyl phosphate. Essential for the maintenance of cellular ATP levels and carbohydrate metabolism. The chain is Glyceraldehyde-3-phosphate dehydrogenase, cytosolic (GAPC) from Antirrhinum majus (Garden snapdragon).